The sequence spans 160 residues: Ribosome maturation factor RimP (160 aa).

This sequence belongs to the RimP family.

Its subcellular location is the cytoplasm. Required for maturation of 30S ribosomal subunits. This Symbiobacterium thermophilum (strain DSM 24528 / JCM 14929 / IAM 14863 / T) protein is Ribosome maturation factor RimP.